A 228-amino-acid polypeptide reads, in one-letter code: MAYPFQLGFQDATSPIMEELLHFHDHTLMIVFLISSLVLYIISLMLTTKLTHTSTMDAQEVETIWTILPAIILILIALPSLRILYMMDEINNPALTVKTMGHQWYWSYEYTDYEDLTFDSYMIPTSDLKPGEMRLLEVDNRVVLPMEMTIRMLVSSEDVLHSWAVPSLGLKTDAIPGRLNQTTLMSTRPGLYYGQCSEICGSNHSFMPIVLELVPLKYFEKWSTSMLT.

Over 1 to 14 (MAYPFQLGFQDATS) the chain is Mitochondrial intermembrane. Residues 15–45 (PIMEELLHFHDHTLMIVFLISSLVLYIISLM) traverse the membrane as a helical segment. The Mitochondrial matrix segment spans residues 46 to 59 (LTTKLTHTSTMDAQ). The helical transmembrane segment at 60-87 (EVETIWTILPAIILILIALPSLRILYMM) threads the bilayer. Residues 88–228 (DEINNPALTV…FEKWSTSMLT (141 aa)) lie on the Mitochondrial intermembrane side of the membrane. Residues histidine 161, cysteine 196, glutamate 198, cysteine 200, histidine 204, and methionine 207 each coordinate Cu cation. Residue glutamate 198 participates in Mg(2+) binding. A Phosphotyrosine modification is found at tyrosine 218.

It belongs to the cytochrome c oxidase subunit 2 family. As to quaternary structure, component of the cytochrome c oxidase (complex IV, CIV), a multisubunit enzyme composed of 14 subunits. The complex is composed of a catalytic core of 3 subunits MT-CO1, MT-CO2 and MT-CO3, encoded in the mitochondrial DNA, and 11 supernumerary subunits COX4I, COX5A, COX5B, COX6A, COX6B, COX6C, COX7A, COX7B, COX7C, COX8 and NDUFA4, which are encoded in the nuclear genome. The complex exists as a monomer or a dimer and forms supercomplexes (SCs) in the inner mitochondrial membrane with NADH-ubiquinone oxidoreductase (complex I, CI) and ubiquinol-cytochrome c oxidoreductase (cytochrome b-c1 complex, complex III, CIII), resulting in different assemblies (supercomplex SCI(1)III(2)IV(1) and megacomplex MCI(2)III(2)IV(2)). Found in a complex with TMEM177, COA6, COX18, COX20, SCO1 and SCO2. Interacts with TMEM177 in a COX20-dependent manner. Interacts with COX20. Interacts with COX16. It depends on Cu cation as a cofactor.

The protein localises to the mitochondrion inner membrane. The enzyme catalyses 4 Fe(II)-[cytochrome c] + O2 + 8 H(+)(in) = 4 Fe(III)-[cytochrome c] + 2 H2O + 4 H(+)(out). Component of the cytochrome c oxidase, the last enzyme in the mitochondrial electron transport chain which drives oxidative phosphorylation. The respiratory chain contains 3 multisubunit complexes succinate dehydrogenase (complex II, CII), ubiquinol-cytochrome c oxidoreductase (cytochrome b-c1 complex, complex III, CIII) and cytochrome c oxidase (complex IV, CIV), that cooperate to transfer electrons derived from NADH and succinate to molecular oxygen, creating an electrochemical gradient over the inner membrane that drives transmembrane transport and the ATP synthase. Cytochrome c oxidase is the component of the respiratory chain that catalyzes the reduction of oxygen to water. Electrons originating from reduced cytochrome c in the intermembrane space (IMS) are transferred via the dinuclear copper A center (CU(A)) of subunit 2 and heme A of subunit 1 to the active site in subunit 1, a binuclear center (BNC) formed by heme A3 and copper B (CU(B)). The BNC reduces molecular oxygen to 2 water molecules using 4 electrons from cytochrome c in the IMS and 4 protons from the mitochondrial matrix. This chain is Cytochrome c oxidase subunit 2 (MT-CO2), found in Sus scrofa (Pig).